Consider the following 257-residue polypeptide: tRNA (cytidine/uridine-2'-O-)-methyltransferase TrmJ (257 aa).

Residues 79–81, Gly114, Ile134, and 141–143 contribute to the S-adenosyl-L-methionine site; these read TSA and SSL.

The protein belongs to the class IV-like SAM-binding methyltransferase superfamily. RNA methyltransferase TrmH family. Homodimer.

It localises to the cytoplasm. It carries out the reaction cytidine(32) in tRNA + S-adenosyl-L-methionine = 2'-O-methylcytidine(32) in tRNA + S-adenosyl-L-homocysteine + H(+). It catalyses the reaction uridine(32) in tRNA + S-adenosyl-L-methionine = 2'-O-methyluridine(32) in tRNA + S-adenosyl-L-homocysteine + H(+). In terms of biological role, catalyzes the formation of 2'O-methylated cytidine (Cm32) or 2'O-methylated uridine (Um32) at position 32 in tRNA. In Yersinia enterocolitica serotype O:8 / biotype 1B (strain NCTC 13174 / 8081), this protein is tRNA (cytidine/uridine-2'-O-)-methyltransferase TrmJ (trmJ).